The sequence spans 161 residues: Large ribosomal subunit protein uL15 (161 aa).

Positions 1-39 are disordered; the sequence is MTKLNELAPREGSTKGRMRVGRGPGSGKGKTAGRGVKGQ. Over residues 22 to 36 the composition is skewed to gly residues; it reads RGPGSGKGKTAGRGV.

It belongs to the universal ribosomal protein uL15 family. As to quaternary structure, part of the 50S ribosomal subunit.

Its function is as follows. Binds to the 23S rRNA. The polypeptide is Large ribosomal subunit protein uL15 (Caulobacter vibrioides (strain ATCC 19089 / CIP 103742 / CB 15) (Caulobacter crescentus)).